Consider the following 102-residue polypeptide: CRISPR-associated endoribonuclease Cas2 (102 aa).

Asp-8 contacts Mg(2+).

This sequence belongs to the CRISPR-associated endoribonuclease Cas2 protein family. As to quaternary structure, homodimer, forms a heterotetramer with a Cas1 homodimer. The cofactor is Mg(2+).

Functionally, CRISPR (clustered regularly interspaced short palindromic repeat), is an adaptive immune system that provides protection against mobile genetic elements (viruses, transposable elements and conjugative plasmids). CRISPR clusters contain sequences complementary to antecedent mobile elements and target invading nucleic acids. CRISPR clusters are transcribed and processed into CRISPR RNA (crRNA). Functions as a ssRNA-specific endoribonuclease. Involved in the integration of spacer DNA into the CRISPR cassette. The sequence is that of CRISPR-associated endoribonuclease Cas2 from Acidovorax ebreus (strain TPSY) (Diaphorobacter sp. (strain TPSY)).